A 498-amino-acid chain; its full sequence is UDP-N-acetylmuramate--L-alanine ligase (498 aa).

ATP is bound at residue 122 to 128; the sequence is GTHGKTS.

Belongs to the MurCDEF family.

The protein localises to the cytoplasm. It carries out the reaction UDP-N-acetyl-alpha-D-muramate + L-alanine + ATP = UDP-N-acetyl-alpha-D-muramoyl-L-alanine + ADP + phosphate + H(+). Its pathway is cell wall biogenesis; peptidoglycan biosynthesis. Cell wall formation. This is UDP-N-acetylmuramate--L-alanine ligase from Corynebacterium jeikeium (strain K411).